The chain runs to 841 residues: Serine/threonine-protein kinase/endoribonuclease IRE1a (841 aa).

A signal peptide spans 1 to 30 (MPPRCPFLRHLFFLLLLLSPWIMSPCGGAA). The Lumenal portion of the chain corresponds to 31–323 (DDVTYPIVPS…KQKYTYLFGQ (293 aa)). N100, N104, N119, N132, and N221 each carry an N-linked (GlcNAc...) asparagine glycan. Residues 324 to 344 (WSPVKLLAPLVLLGVVVSVFI) traverse the membrane as a helical segment. Topologically, residues 345–841 (KKFSSRGSDV…FRKYFKCDII (497 aa)) are cytoplasmic. Residues 352–382 (SDVSLKAGPSKKKKNRKSAKDTNRQSVPRGQ) are disordered. One can recognise a Protein kinase domain in the interval 414 to 704 (FLSSKEIAKG…ATEVLLHPMF (291 aa)). ATP-binding positions include 420-428 (IAKGSNGTV) and K442. D570 functions as the Proton acceptor in the catalytic mechanism. The region spanning 707-838 (SEMRLSFLRD…EEVFRKYFKC (132 aa)) is the KEN domain.

This sequence belongs to the protein kinase superfamily. Ser/Thr protein kinase family. Homodimer; disulfide-linked. Dimer formation is driven by hydrophobic interactions within the N-terminal luminal domains and stabilized by disulfide bridges. Requires Mg(2+) as cofactor. Autophosphorylated. As to expression, ubiquitous. Detected in the vascular bundles of young plants, leaves, roots, seedlings and in the receptacles of flowers and vascular bundles of the petals.

Its subcellular location is the endoplasmic reticulum membrane. The catalysed reaction is L-seryl-[protein] + ATP = O-phospho-L-seryl-[protein] + ADP + H(+). It catalyses the reaction L-threonyl-[protein] + ATP = O-phospho-L-threonyl-[protein] + ADP + H(+). With respect to regulation, the kinase domain is activated by trans-autophosphorylation. Kinase activity is required for activation of the endoribonuclease domain. Senses unfolded proteins in the lumen of the endoplasmic reticulum via its N-terminal domain which leads to enzyme auto-activation. The active endoribonuclease domain splices bZIP60 mRNA to generate a new C-terminus, converting it into a potent unfolded-protein response transcriptional activator which then induces transcription of UPR target genes. Involved in organ growth regulation. Plays a role in plant immunity and abiotic stress responses. The sequence is that of Serine/threonine-protein kinase/endoribonuclease IRE1a (IRE1A) from Arabidopsis thaliana (Mouse-ear cress).